Reading from the N-terminus, the 75-residue chain is UPF0352 protein VF_1649 (75 aa).

The protein belongs to the UPF0352 family.

This Aliivibrio fischeri (strain ATCC 700601 / ES114) (Vibrio fischeri) protein is UPF0352 protein VF_1649.